The sequence spans 417 residues: PRKCA-binding protein (417 aa).

The PDZ domain maps to 22–105; the sequence is KVTLQKDAQN…EVTIHYNKLQ (84 aa). Zn(2+)-binding residues include C44 and C46. T82 is modified (phosphothreonine). The region spanning 144 to 357 is the AH domain; it reads LCNDGLVKRL…CYSVLRDADV (214 aa). The disordered stretch occupies residues 375–417; the sequence is QDEFTDGEDEEDEDEEDTAAGEPPRDSRGAAGPLDKGGSWCNS. Positions 377–393 are enriched in acidic residues; that stretch reads EFTDGEDEEDEDEEDTA. C415 carries the S-palmitoyl cysteine; by DHHC8 lipid modification.

Monomer and homodimer. Interacts with CXADR. Interacts presynaptically with the glutamate receptors GRIA2, GRIA3, GRIK3, isoform 3 of GRIA4, isoform A of GRM4, GRM7 and GRM8; with NAPA and NAPB; and with BTG2. The interaction with NAPA and NAPB disrupts the interaction with GRIA2, conducting to the internalization of GRIA2. Interacts with PRKCA; with the amine transporters SLC6A2 and SLC6A3; with the channels ASIC1 and ASIC2; with the GTP-binding proteins ARF1 and ARF3; with the ephrin receptor tyrosine kinases EPHA7, EPHB1 and EPHB2; with ERBB2 and through its PDZ domain with the C-terminal tail of PRLHR. Interacts with UNC5A. Interacts (via AH domain) with NCS1/FREQ; in a calcium-dependent manner. Interacts with F-actin and associates with the ARP2/3 complex. Interacts (via PDZ domain) with ARF1 (activated); the interaction blocks Arp2/3 complex inhibition. Interacts with SORCS3. In terms of processing, phosphorylation at Thr-82 appears to inhibit the interaction with AMPA receptors. Post-translationally, palmitoylation on Cys-415 is essential for long-term synaptic depression (LTD).

The protein resides in the cytoplasm. Its subcellular location is the perinuclear region. It localises to the membrane. The protein localises to the postsynaptic density. It is found in the synapse. The protein resides in the synaptosome. Its subcellular location is the cytoskeleton. Functionally, probable adapter protein that bind to and organize the subcellular localization of a variety of membrane proteins containing some PDZ recognition sequence. Involved in the clustering of various receptors, possibly by acting at the receptor internalization level. Plays a role in synaptic plasticity by regulating the trafficking and internalization of AMPA receptors. May be regulated upon PRKCA activation. May regulate ASIC1/ASIC3 channel. Regulates actin polymerization by inhibiting the actin-nucleating activity of the Arp2/3 complex; the function is competitive with nucleation promoting factors and is linked to neuronal morphology regulation and AMPA receptor (AMPAR) endocytosis. Via interaction with the Arp2/3 complex involved in regulation of synaptic plasicity of excitatory synapses and required for spine shrinkage during long-term depression (LTD). Involved in regulation of astrocyte morphology, antagonistic to Arp2/3 complex activator WASL/N-WASP function. This Bos taurus (Bovine) protein is PRKCA-binding protein (PICK1).